We begin with the raw amino-acid sequence, 348 residues long: Spore development regulator vosA (348 aa).

A Velvet domain is found at 46–244 (ALSPSSCFLS…SDQGVRLRLR (199 aa)). The disordered stretch occupies residues 250 to 294 (MMSNKRSISGSGDLTSDQSQQQQQQQPLAKKRREDSVESANPSSL). A compositionally biased stretch (polar residues) spans 253-266 (NKRSISGSGDLTSD). Positions 274–280 (QQPLAKK) match the Nuclear localization signal motif.

Belongs to the velvet family. VosA subfamily. Forms a heterodimeric complex with VEL2; the formation of the VEL2-VOS1 complex is light-dependent.

It localises to the nucleus. Its function is as follows. Component of the velB-VosA heterodimeric complex that plays a dual role in activating genes associated with spore maturation and repressing certain development-associated genes. The complex binds DNA through the DNA-binding domain of vosA that recognizes an 11-nucleotide consensus sequence 5'-CTGGCCGCGGC-3' consisting of two motifs in the promoters of key developmental regulatory genes. Regulates spore viability, trehalose accumulation, and tolerance to thermal and oxidative as well as ion stresses. Positively regulates conidial pigmentation and pathogenicity on barley. This Cochliobolus sativus (strain ND90Pr / ATCC 201652) (Common root rot and spot blotch fungus) protein is Spore development regulator vosA.